The chain runs to 48 residues: Small, acid-soluble spore protein P (48 aa).

Positions 1–12 (MTNKNDSKDMRK) are enriched in basic and acidic residues. Positions 1-48 (MTNKNDSKDMRKNVSKGDNPGQPEPLDGSKKVKNRNHTRQKHNTSHDM) are disordered. A compositionally biased stretch (basic residues) spans 31–48 (KVKNRNHTRQKHNTSHDM).

The protein belongs to the SspP family.

The protein localises to the spore core. In Geobacillus thermodenitrificans (strain NG80-2), this protein is Small, acid-soluble spore protein P.